A 186-amino-acid chain; its full sequence is uncharacterized protein (186 aa).

A run of 3 helical transmembrane segments spans residues 42 to 62 (ISIA…LSVL), 80 to 100 (LLFL…IGLV), and 131 to 151 (ICGI…FIVL).

It to U.parvum UU008, UU041 and UU042.

The protein localises to the cell membrane. This is an uncharacterized protein from Ureaplasma parvum serovar 3 (strain ATCC 700970).